A 285-amino-acid polypeptide reads, in one-letter code: 4-diphosphocytidyl-2-C-methyl-D-erythritol kinase (285 aa).

Residue Lys11 is part of the active site. Residue Pro93–Ala103 participates in ATP binding. Asp135 is a catalytic residue.

It belongs to the GHMP kinase family. IspE subfamily.

The enzyme catalyses 4-CDP-2-C-methyl-D-erythritol + ATP = 4-CDP-2-C-methyl-D-erythritol 2-phosphate + ADP + H(+). It participates in isoprenoid biosynthesis; isopentenyl diphosphate biosynthesis via DXP pathway; isopentenyl diphosphate from 1-deoxy-D-xylulose 5-phosphate: step 3/6. In terms of biological role, catalyzes the phosphorylation of the position 2 hydroxy group of 4-diphosphocytidyl-2C-methyl-D-erythritol. This Moorella thermoacetica (strain ATCC 39073 / JCM 9320) protein is 4-diphosphocytidyl-2-C-methyl-D-erythritol kinase.